The primary structure comprises 119 residues: Vitelline membrane protein Vm34Ca (119 aa).

Residues 1-19 (MKCIAIVSTICLLAAFVAA) form the signal peptide. One can recognise a VM domain in the interval 69-106 (SIPAPPCPKNYLFSCQPNLAPVPCSAPAPSYGSAGAYS).

This sequence belongs to the vitelline membrane protein family. As to expression, follicle cells.

The protein resides in the secreted. In terms of biological role, major early eggshell protein. The protein is Vitelline membrane protein Vm34Ca (Vm34Ca) of Drosophila melanogaster (Fruit fly).